A 208-amino-acid polypeptide reads, in one-letter code: ATP phosphoribosyltransferase (208 aa).

It belongs to the ATP phosphoribosyltransferase family. Short subfamily. As to quaternary structure, heteromultimer composed of HisG and HisZ subunits.

The protein resides in the cytoplasm. The enzyme catalyses 1-(5-phospho-beta-D-ribosyl)-ATP + diphosphate = 5-phospho-alpha-D-ribose 1-diphosphate + ATP. The protein operates within amino-acid biosynthesis; L-histidine biosynthesis; L-histidine from 5-phospho-alpha-D-ribose 1-diphosphate: step 1/9. Its function is as follows. Catalyzes the condensation of ATP and 5-phosphoribose 1-diphosphate to form N'-(5'-phosphoribosyl)-ATP (PR-ATP). Has a crucial role in the pathway because the rate of histidine biosynthesis seems to be controlled primarily by regulation of HisG enzymatic activity. The polypeptide is ATP phosphoribosyltransferase (hisG) (Thermotoga maritima (strain ATCC 43589 / DSM 3109 / JCM 10099 / NBRC 100826 / MSB8)).